The following is a 380-amino-acid chain: Cytochrome b (380 aa).

Helical transmembrane passes span 33–53 (FGSL…FLAM), 77–98 (WMIR…FLHI), 113–133 (WNIG…GYVL), and 178–198 (FFTL…LHLL). The heme b site is built by His-83 and His-97. Heme b-binding residues include His-182 and His-196. His-201 provides a ligand contact to a ubiquinone. 4 helical membrane passes run 226 to 246 (IKDI…TLLS), 288 to 308 (LGGV…PALH), 320 to 340 (LSQF…WIGG), and 347 to 367 (FITI…LLMP).

The protein belongs to the cytochrome b family. The cytochrome bc1 complex contains 11 subunits: 3 respiratory subunits (MT-CYB, CYC1 and UQCRFS1), 2 core proteins (UQCRC1 and UQCRC2) and 6 low-molecular weight proteins (UQCRH/QCR6, UQCRB/QCR7, UQCRQ/QCR8, UQCR10/QCR9, UQCR11/QCR10 and a cleavage product of UQCRFS1). This cytochrome bc1 complex then forms a dimer. It depends on heme b as a cofactor.

Its subcellular location is the mitochondrion inner membrane. Component of the ubiquinol-cytochrome c reductase complex (complex III or cytochrome b-c1 complex) that is part of the mitochondrial respiratory chain. The b-c1 complex mediates electron transfer from ubiquinol to cytochrome c. Contributes to the generation of a proton gradient across the mitochondrial membrane that is then used for ATP synthesis. The polypeptide is Cytochrome b (MT-CYB) (Pongo abelii (Sumatran orangutan)).